We begin with the raw amino-acid sequence, 598 residues long: Aspartate--tRNA(Asp/Asn) ligase (598 aa).

Glu175 serves as a coordination point for L-aspartate. An aspartate region spans residues 199 to 202 (QQFK). L-aspartate contacts are provided by Arg221 and His452. 221–223 (RDE) serves as a coordination point for ATP. Glu486 serves as a coordination point for ATP. Arg493 contacts L-aspartate. 538–541 (GVDR) lines the ATP pocket.

The protein belongs to the class-II aminoacyl-tRNA synthetase family. Type 1 subfamily. In terms of assembly, homodimer.

It is found in the cytoplasm. It catalyses the reaction tRNA(Asx) + L-aspartate + ATP = L-aspartyl-tRNA(Asx) + AMP + diphosphate. In terms of biological role, aspartyl-tRNA synthetase with relaxed tRNA specificity since it is able to aspartylate not only its cognate tRNA(Asp) but also tRNA(Asn). Reaction proceeds in two steps: L-aspartate is first activated by ATP to form Asp-AMP and then transferred to the acceptor end of tRNA(Asp/Asn). In Gluconobacter oxydans (strain 621H) (Gluconobacter suboxydans), this protein is Aspartate--tRNA(Asp/Asn) ligase.